A 49-amino-acid polypeptide reads, in one-letter code: Large ribosomal subunit protein bL33B (49 aa).

The protein belongs to the bacterial ribosomal protein bL33 family.

The sequence is that of Large ribosomal subunit protein bL33B from Latilactobacillus sakei subsp. sakei (strain 23K) (Lactobacillus sakei subsp. sakei).